We begin with the raw amino-acid sequence, 88 residues long: MKEGIHPEYREVVFMDVQTGNKFITRSTIHTRETVEMDGKTYPLFKCDVTSESHPFYTGAQTRIVETGRVEKFRARFARTAGTVKSAS.

The protein belongs to the bacterial ribosomal protein bL31 family. Type B subfamily. As to quaternary structure, part of the 50S ribosomal subunit.

The sequence is that of Large ribosomal subunit protein bL31B from Bordetella bronchiseptica (strain ATCC BAA-588 / NCTC 13252 / RB50) (Alcaligenes bronchisepticus).